The primary structure comprises 364 residues: Aminomethyltransferase (364 aa).

The protein belongs to the GcvT family. As to quaternary structure, the glycine cleavage system is composed of four proteins: P, T, L and H.

The catalysed reaction is N(6)-[(R)-S(8)-aminomethyldihydrolipoyl]-L-lysyl-[protein] + (6S)-5,6,7,8-tetrahydrofolate = N(6)-[(R)-dihydrolipoyl]-L-lysyl-[protein] + (6R)-5,10-methylene-5,6,7,8-tetrahydrofolate + NH4(+). Functionally, the glycine cleavage system catalyzes the degradation of glycine. The sequence is that of Aminomethyltransferase from Escherichia coli O157:H7.